A 593-amino-acid polypeptide reads, in one-letter code: Phosphoinositide phosphatase SAC6 (593 aa).

One can recognise an SAC domain in the interval 128–456 (LSVAERTTGL…GDDISIQYSG (329 aa)). The Phosphatase catalytic core motif lies at 391-402 (RTNCIDCLDRTN). 2 helical membrane passes run 526–546 (AVAN…FATM) and 555–575 (YKHL…AALV).

Predominantly expressed in flowers.

Its subcellular location is the endoplasmic reticulum membrane. In terms of biological role, phosphoinositide phosphatase that hydrolyzes PtdIns(3)P and PtdIns(4)P. Involved in priming for different defense responses. This Arabidopsis thaliana (Mouse-ear cress) protein is Phosphoinositide phosphatase SAC6 (SAC6).